The chain runs to 968 residues: RNA polymerase-associated protein RapA (968 aa).

The Helicase ATP-binding domain occupies 164-334; it reads DVGRRHAPRV…FARLRLLDPN (171 aa). ATP is bound at residue 177–184; that stretch reads DEVGLGKT. The short motif at 280–283 is the DEAH box element; the sequence is DEAH. The region spanning 490–685 is the Helicase C-terminal domain; it reads RVEWLMGYLT…ALKAQLEQGR (196 aa).

Belongs to the SNF2/RAD54 helicase family. RapA subfamily. Interacts with the RNAP. Has a higher affinity for the core RNAP than for the holoenzyme. Its ATPase activity is stimulated by binding to RNAP.

Its function is as follows. Transcription regulator that activates transcription by stimulating RNA polymerase (RNAP) recycling in case of stress conditions such as supercoiled DNA or high salt concentrations. Probably acts by releasing the RNAP, when it is trapped or immobilized on tightly supercoiled DNA. Does not activate transcription on linear DNA. Probably not involved in DNA repair. This chain is RNA polymerase-associated protein RapA, found in Salmonella paratyphi A (strain ATCC 9150 / SARB42).